A 514-amino-acid chain; its full sequence is UDP-N-acetylmuramyl-tripeptide synthetase (514 aa).

UDP-N-acetyl-alpha-D-muramoyl-L-alanyl-D-glutamate contacts are provided by Leu-44 and Ser-46. 129 to 135 contributes to the ATP binding site; sequence GTNGKTS. Residues 171–172, Ser-198, and Arg-206 each bind UDP-N-acetyl-alpha-D-muramoyl-L-alanyl-D-glutamate; that span reads TT. Residue Lys-238 is modified to N6-carboxylysine.

It belongs to the MurCDEF family. MurE subfamily. Carboxylation is probably crucial for Mg(2+) binding and, consequently, for the gamma-phosphate positioning of ATP.

The protein localises to the cytoplasm. The protein operates within cell wall biogenesis; peptidoglycan biosynthesis. Catalyzes the addition of an amino acid to the nucleotide precursor UDP-N-acetylmuramoyl-L-alanyl-D-glutamate (UMAG) in the biosynthesis of bacterial cell-wall peptidoglycan. The chain is UDP-N-acetylmuramyl-tripeptide synthetase from Leifsonia xyli subsp. xyli (strain CTCB07).